The chain runs to 697 residues: MQTQEILRILRLPELSDLGQFFRSLSATTLVSMGALAAILAYWLTHRPKALQPPCNLLMQSEEVEDSGGARRSVIGDCTQLLTHYYDDARTMYQVFRRGLSISGNGPCLGFRKPEQPYQWLSYQEVAKRAEFLGSGLLQHDCKVGTEQFIGVFAQNRPEWIIAELACYTYSMVVVPLYDTLGPGSIRYIINTADICTVIVDKPHKAILLLEHVERKETPGLKLVILMEPFDDALRERGKKCGVDIKSMQAIEDSGQENHRVPVPPRPDDLSIVCFTSGTTGNPKGAMLTHGNVVADFSGFLKVTESQWAPTCADVHFSYLPLAHMFERMVQSVVYCHGGRVGFFQGDIRLLSDDMKALRPTIFPVVPRLLNRMYDKIFHQADTSLKRWLLEFAAKRKQAEVRSGIIRNNSIWDELFFNKIQASLGGHVRMIVTGAAPASPTVLGFLRAALGCQVYEGYGQTECTAGCTFTTPGDWTSGHVGAPLPCNHIKLVDAEELNYWTSKGEGEICVKGPNVFKGYLKDEDRTKEALDSDGWLHTGDIGKWLPEGTLKIIDRKKHIFKLAQGEYVAPEKIENIYIRSEPVAQIYVHGDSLKAFLVGIVVPDPEVMPCWAQKKGIEGNYQELCKSKELKKAILDDMVMLGKESGLHSFEQVKAIYIHCDMFSVQNGLLTPTLKAKRPELREYFKKQIEELYSISM.

The helical; Signal-anchor for type III membrane protein transmembrane segment at 25–45 threads the bilayer; sequence LSATTLVSMGALAAILAYWLT. The Cytoplasmic segment spans residues 46–697; sequence HRPKALQPPC…QIEELYSISM (652 aa).

It belongs to the ATP-dependent AMP-binding enzyme family. Mg(2+) serves as cofactor. In terms of tissue distribution, expressed predominantly in brain and, to a much lesser extent, in heart and adrenal.

It is found in the mitochondrion outer membrane. The protein localises to the peroxisome membrane. The protein resides in the microsome membrane. Its subcellular location is the endoplasmic reticulum membrane. The catalysed reaction is a long-chain fatty acid + ATP + CoA = a long-chain fatty acyl-CoA + AMP + diphosphate. The enzyme catalyses (5Z,8Z,11Z,14Z)-eicosatetraenoate + ATP + CoA = (5Z,8Z,11Z,14Z)-eicosatetraenoyl-CoA + AMP + diphosphate. It carries out the reaction 15-hydroxy-(5Z,8Z,11Z,13E)-eicosatetraenoate + ATP + CoA = 15-hydroxy-(5Z,8Z,11Z,13E)-eicosatetraenoyl-CoA + AMP + diphosphate. It catalyses the reaction 12-hydroxy-(5Z,8Z,10E,14Z)-eicosatetraenoate + ATP + CoA = 12-hydroxy-(5Z,8Z,10E,14Z)-eicosatetraenoyl-CoA + AMP + diphosphate. The catalysed reaction is 5-hydroxy-(6E,8Z,11Z,14Z)-eicosatetraenoate + ATP + CoA = 5-hydroxy-(6E,8Z,11Z,14Z)-eicosatetraenoyl-CoA + AMP + diphosphate. The enzyme catalyses hexadecanoate + ATP + CoA = hexadecanoyl-CoA + AMP + diphosphate. It carries out the reaction (E)-hexadec-2-enoate + ATP + CoA = (2E)-hexadecenoyl-CoA + AMP + diphosphate. Catalyzes the conversion of long-chain fatty acids to their active form acyl-CoA for both synthesis of cellular lipids, and degradation via beta-oxidation. Plays an important role in fatty acid metabolism in brain and the acyl-CoAs produced may be utilized exclusively for the synthesis of the brain lipid. This chain is Long-chain-fatty-acid--CoA ligase 6, found in Rattus norvegicus (Rat).